Here is a 27-residue protein sequence, read N- to C-terminus: Pregnancy-associated glycoprotein 62 (27 aa).

The protein belongs to the peptidase A1 family. Glycosylated. Placenta.

The protein is Pregnancy-associated glycoprotein 62 (PAG62) of Capra hircus (Goat).